The sequence spans 251 residues: Triosephosphate isomerase (251 aa).

9 to 11 is a substrate binding site; that stretch reads NWK. His95 serves as the catalytic Electrophile. The Proton acceptor role is filled by Glu167. Residues Gly173, Ser213, and 234 to 235 contribute to the substrate site; that span reads GG.

The protein belongs to the triosephosphate isomerase family. In terms of assembly, homodimer.

It localises to the cytoplasm. It carries out the reaction D-glyceraldehyde 3-phosphate = dihydroxyacetone phosphate. Its pathway is carbohydrate biosynthesis; gluconeogenesis. The protein operates within carbohydrate degradation; glycolysis; D-glyceraldehyde 3-phosphate from glycerone phosphate: step 1/1. Involved in the gluconeogenesis. Catalyzes stereospecifically the conversion of dihydroxyacetone phosphate (DHAP) to D-glyceraldehyde-3-phosphate (G3P). This Ligilactobacillus salivarius (strain UCC118) (Lactobacillus salivarius) protein is Triosephosphate isomerase.